A 38-amino-acid polypeptide reads, in one-letter code: Humanin-like protein (38 aa).

As to expression, in the testis, expressed in Leydig cells at 10, 20 and 60 days of age (at protein level). Also expressed in pachytene spermatocytes at day 20 and in vessels, peritubular cells and spermatids at day 60. Not detected in Sertoli cells (at protein level). In the adult ovary, expressed in stromal cells, granulosa cells, theca cells and oocytes at diestrus and proestrus (at protein level). Expressed in the anterior pituitary where it is detected in lactotropes and somatotropes with lower levels in females than males (at protein level). In the hippocampus, expressed in astrocytes but not in neurons or oligodendrocytes (at protein level). Expressed in muscle, liver and hypothalamus but not in epididymal fat (at protein level). Widely expressed with highest levels in cardiac and skeletal muscle and lowest levels in lung, testis and uterus. In the CNS, levels are relatively high in the cerebellum and cortex and low in the hippocampus. In the hippocampus, lower levels are detected in ovariectomized animals than in controls.

It localises to the mitochondrion. Its subcellular location is the secreted. The protein localises to the cytoplasm. In terms of biological role, plays a role as a neuroprotective factor. Protects against neuronal cell death induced by amyloid-beta peptides. Also protects against excitotoxic cell death. Prevents amyloid-beta peptide-induced spatial learning and memory impairments, protects against amyloid-beta peptide-induced suppression of hippocampal long-term potentiation, and inhibits amyloid-beta peptide-induced activation of STAT3 and inhibition of CASP3. Prevents glutamate-induced dendritic atrophy in hippocampal neurons and also prevents glutamate-induced decrease in SYP puncta number and total puncta area. Protects anterior pituitary cells from TNF-induced apoptosis. Plays a role in ovarian follicle development by acting as a cryoprotective factor for granulosa cells in the antral follicle. Increases androgen production in Leydig cells and promotes Leydig cell survival by preventing apoptosis. This is Humanin-like protein from Rattus norvegicus (Rat).